A 409-amino-acid chain; its full sequence is Nucleoprotein (409 aa).

Disordered regions lie at residues Met-1–Asn-32, Leu-44–Gly-69, Ala-121–Ser-145, Arg-164–Asp-195, and Val-238–Asn-259. A compositionally biased stretch (low complexity) spans Pro-15–Gly-31. The segment at Ser-29–Leu-160 is RNA-binding. Residues Gly-31 to Asp-156 enclose the CoV N NTD domain. Residues Arg-164–Ala-179 are compositionally biased toward low complexity. Composition is skewed to basic and acidic residues over residues Pro-180 to Ser-192 and Lys-247 to Asn-259. Residues Ser-190 and Ser-192 each carry the phosphoserine; by host modification. The CoV N CTD domain occupies Thr-215 to Pro-331. The tract at residues Arg-226–Asp-333 is dimerization. Cys-320 and Cys-323 form a disulfide bridge. The disordered stretch occupies residues Gly-326–Leu-409. The span at Arg-341–Gln-358 shows a compositional bias: low complexity. Basic and acidic residues predominate over residues Lys-368 to Asn-384. Position 378 is a phosphothreonine; by host (Thr-378). Residue Ser-379 is modified to Phosphoserine; by host.

Belongs to the gammacoronavirus nucleocapsid protein family. In terms of assembly, homooligomer. Both monomeric and oligomeric forms interact with RNA. Interacts with protein M. Interacts with NSP3; this interaction serves to tether the genome to the newly translated replicase-transcriptase complex at a very early stage of infection. In terms of processing, ADP-ribosylated. The ADP-ribosylation is retained in the virion during infection. Post-translationally, phosphorylated on serine and threonine residues.

It localises to the virion. The protein localises to the host endoplasmic reticulum-Golgi intermediate compartment. Its subcellular location is the host Golgi apparatus. Functionally, packages the positive strand viral genome RNA into a helical ribonucleocapsid (RNP) and plays a fundamental role during virion assembly through its interactions with the viral genome and membrane protein M. Plays an important role in enhancing the efficiency of subgenomic viral RNA transcription as well as viral replication. The sequence is that of Nucleoprotein from Gallus gallus (Chicken).